The sequence spans 465 residues: MGRTLAEKVWDAHVVRRADGEPDLLYIDLHLVHEVTSPQAFEALRLAGRPLRRPDLTLATEDHNVPTTNTLAPIADPISAAQVEALRKNCAEFGVRLYPMNDPGQGIVHVVGPQLGLSQPGMTIVCGDSHTSTHGAFGALAFGIGTSQVEHVLATQTLPQSRPKTMAVTVDGDLPAGVTAKDLILAIIARIGTGGGAGHVIEYRGAAVRGLSMEGRMTVCNMSIEAGARAGMIAPDDTTFEYLAGRAHAATGPDWDQAVAYWRTLASDDDAVFDREVVIDAASLTPYVTWGTNPGQAAPLGSLIPAPADYADPAARASVERALTYMGLTAGTPLSEVTVDTVFIGSCTNGRLSDLRAAADVLRGRRVADGVRALVVPGSMQVKAEAEAEGLDEVFRAAGAEWRSAGCSMCLGMNPDTLRPGERSASTSNRNFEGRQGPGGRTHLVSPAVAAATAVTGQLTAPAQL.

[4Fe-4S] cluster-binding residues include cysteine 347, cysteine 407, and cysteine 410. The interval 416–443 (DTLRPGERSASTSNRNFEGRQGPGGRTH) is disordered.

The protein belongs to the aconitase/IPM isomerase family. LeuC type 1 subfamily. In terms of assembly, heterodimer of LeuC and LeuD. It depends on [4Fe-4S] cluster as a cofactor.

It catalyses the reaction (2R,3S)-3-isopropylmalate = (2S)-2-isopropylmalate. It participates in amino-acid biosynthesis; L-leucine biosynthesis; L-leucine from 3-methyl-2-oxobutanoate: step 2/4. In terms of biological role, catalyzes the isomerization between 2-isopropylmalate and 3-isopropylmalate, via the formation of 2-isopropylmaleate. This Frankia alni (strain DSM 45986 / CECT 9034 / ACN14a) protein is 3-isopropylmalate dehydratase large subunit.